Reading from the N-terminus, the 235-residue chain is Large ribosomal subunit protein uL1 (235 aa).

This sequence belongs to the universal ribosomal protein uL1 family. As to quaternary structure, part of the 50S ribosomal subunit.

Binds directly to 23S rRNA. The L1 stalk is quite mobile in the ribosome, and is involved in E site tRNA release. In terms of biological role, protein L1 is also a translational repressor protein, it controls the translation of the L11 operon by binding to its mRNA. This Prochlorococcus marinus (strain NATL1A) protein is Large ribosomal subunit protein uL1.